The following is a 682-amino-acid chain: Transcription activator of gluconeogenesis PODANS_4_8760 (682 aa).

Residues 1–72 (MPEDGGPFGS…KDPLRPRRKK (72 aa)) form a disordered region. Over residues 9 to 21 (GSEAAEASGAMSE) the composition is skewed to low complexity. Basic and acidic residues-rich tracts occupy residues 29 to 41 (HEPH…DRMS) and 54 to 67 (GEVK…DPLR). Positions 77–105 (CYACQRAHLTCGDERPCQRCIKRGLQDSC) form a DNA-binding region, zn(2)-C6 fungal-type. 5 disordered regions span residues 122-148 (EALR…RHHS), 181-211 (LTES…SGMV), 325-375 (PAGP…RPSK), 509-541 (NRNT…AASG), and 586-622 (TDKP…HSIL). Polar residues-rich tracts occupy residues 185–206 (LPFN…SNPP), 329–345 (TSLQ…QPTT), and 354–373 (PTMS…NSRP).

Belongs to the ERT1/acuK family.

It is found in the nucleus. Its function is as follows. Transcription factor which regulates nonfermentable carbon utilization. Activator of gluconeogenetic genes. The polypeptide is Transcription activator of gluconeogenesis PODANS_4_8760 (Podospora anserina (strain S / ATCC MYA-4624 / DSM 980 / FGSC 10383) (Pleurage anserina)).